Consider the following 337-residue polypeptide: tRNA N6-adenosine threonylcarbamoyltransferase (337 aa).

Positions 114 and 118 each coordinate Fe cation. Residues 136 to 140, D169, G182, D186, and N275 each bind substrate; that span reads LVSGG. A Fe cation-binding site is contributed by D301.

Belongs to the KAE1 / TsaD family. It depends on Fe(2+) as a cofactor.

The protein localises to the cytoplasm. The catalysed reaction is L-threonylcarbamoyladenylate + adenosine(37) in tRNA = N(6)-L-threonylcarbamoyladenosine(37) in tRNA + AMP + H(+). Functionally, required for the formation of a threonylcarbamoyl group on adenosine at position 37 (t(6)A37) in tRNAs that read codons beginning with adenine. Is involved in the transfer of the threonylcarbamoyl moiety of threonylcarbamoyl-AMP (TC-AMP) to the N6 group of A37, together with TsaE and TsaB. TsaD likely plays a direct catalytic role in this reaction. This is tRNA N6-adenosine threonylcarbamoyltransferase from Streptococcus thermophilus (strain ATCC BAA-491 / LMD-9).